A 191-amino-acid chain; its full sequence is Peptidyl-tRNA hydrolase (191 aa).

Y17 is a tRNA binding site. The active-site Proton acceptor is the H22. TRNA is bound by residues Y68, N70, and N116.

The protein belongs to the PTH family. Monomer.

The protein localises to the cytoplasm. It catalyses the reaction an N-acyl-L-alpha-aminoacyl-tRNA + H2O = an N-acyl-L-amino acid + a tRNA + H(+). In terms of biological role, hydrolyzes ribosome-free peptidyl-tRNAs (with 1 or more amino acids incorporated), which drop off the ribosome during protein synthesis, or as a result of ribosome stalling. Its function is as follows. Catalyzes the release of premature peptidyl moieties from peptidyl-tRNA molecules trapped in stalled 50S ribosomal subunits, and thus maintains levels of free tRNAs and 50S ribosomes. The chain is Peptidyl-tRNA hydrolase from Mycobacterium ulcerans (strain Agy99).